The sequence spans 36 residues: Kappa-theraphotoxin-Aa1a (36 aa).

3 cysteine pairs are disulfide-bonded: cysteine 3–cysteine 18, cysteine 10–cysteine 23, and cysteine 17–cysteine 30. The residue at position 36 (isoleucine 36) is an Isoleucine amide.

This sequence belongs to the neurotoxin 10 (Hwtx-1) family. As to expression, expressed by the venom gland.

Its subcellular location is the secreted. In terms of biological role, selective inhibitor of voltage-gated potassium channel Kv10.1/KCNH1/EAG1 (IC(50)=637 nM). It acts by shifting the voltage dependence of channel activation in a depolarising direction. It shows a 100% inhibition at saturating concentrations, shows fast on-rates and is reversible. It also slightly affects channel inactivation, when the membrane is highly depolarised (&gt;+80 mV). In Avicularia aurantiaca (Yellow-banded pinktoe tarantula), this protein is Kappa-theraphotoxin-Aa1a.